The primary structure comprises 212 residues: Adapter protein MecA 2 (212 aa).

The protein belongs to the MecA family. In terms of assembly, homodimer.

In terms of biological role, enables the recognition and targeting of unfolded and aggregated proteins to the ClpC protease or to other proteins involved in proteolysis. Acts negatively in the development of competence by binding ComK and recruiting it to the ClpCP protease. When overexpressed, inhibits sporulation. Also involved in Spx degradation by ClpC. The sequence is that of Adapter protein MecA 2 (mecA2) from Halalkalibacterium halodurans (strain ATCC BAA-125 / DSM 18197 / FERM 7344 / JCM 9153 / C-125) (Bacillus halodurans).